Here is a 502-residue protein sequence, read N- to C-terminus: CDP-diacylglycerol--glycerol-3-phosphate 3-phosphatidyltransferase (502 aa).

Position 58 to 65 (S58 to E65) interacts with ATP. PLD phosphodiesterase domains follow at residues G143 to Y169 and K410 to S443. Active-site residues include H148, K150, and D155.

It belongs to the CDP-alcohol phosphatidyltransferase class-II family.

The protein localises to the mitochondrion. The catalysed reaction is a CDP-1,2-diacyl-sn-glycerol + sn-glycerol 3-phosphate = a 1,2-diacyl-sn-glycero-3-phospho-(1'-sn-glycero-3'-phosphate) + CMP + H(+). It participates in phospholipid metabolism; phosphatidylglycerol biosynthesis; phosphatidylglycerol from CDP-diacylglycerol: step 1/2. Its function is as follows. Functions in the biosynthesis of the anionic phospholipids phosphatidylglycerol and cardiolipin. The sequence is that of CDP-diacylglycerol--glycerol-3-phosphate 3-phosphatidyltransferase (pgs1) from Schizosaccharomyces pombe (strain 972 / ATCC 24843) (Fission yeast).